Consider the following 584-residue polypeptide: Methionine--tRNA ligase (584 aa).

Residues 12-22 (PYANGDLHLGH) carry the 'HIGH' region motif. Cys144, Cys147, Cys157, and Cys160 together coordinate Zn(2+). Residues 334 to 338 (QFSTS) carry the 'KMSKS' region motif. Thr337 serves as a coordination point for ATP. Residues 541 to 563 (EGRDRWAPSELEAGRPLPPPQPL) form a disordered region.

The protein belongs to the class-I aminoacyl-tRNA synthetase family. MetG type 1 subfamily. Monomer. Zn(2+) serves as cofactor.

The protein resides in the cytoplasm. It catalyses the reaction tRNA(Met) + L-methionine + ATP = L-methionyl-tRNA(Met) + AMP + diphosphate. Is required not only for elongation of protein synthesis but also for the initiation of all mRNA translation through initiator tRNA(fMet) aminoacylation. The chain is Methionine--tRNA ligase from Thermomicrobium roseum (strain ATCC 27502 / DSM 5159 / P-2).